Here is a 520-residue protein sequence, read N- to C-terminus: Glutamate--cysteine ligase (520 aa).

This sequence belongs to the glutamate--cysteine ligase type 1 family. Type 1 subfamily.

The catalysed reaction is L-cysteine + L-glutamate + ATP = gamma-L-glutamyl-L-cysteine + ADP + phosphate + H(+). It functions in the pathway sulfur metabolism; glutathione biosynthesis; glutathione from L-cysteine and L-glutamate: step 1/2. In Leptospira interrogans serogroup Icterohaemorrhagiae serovar copenhageni (strain Fiocruz L1-130), this protein is Glutamate--cysteine ligase.